We begin with the raw amino-acid sequence, 61 residues long: Truncated Cytokine response-modifying protein B (61 aa).

Its function is as follows. The protein is truncated in this strain and presumably inactive. It has similarities with variola virus CrmB, but the product is inactivated due to several premature stop codon. The chain is Truncated Cytokine response-modifying protein B from Bos taurus (Bovine).